The primary structure comprises 64 residues: Large ribosomal subunit protein bL35 (64 aa).

The span at 1–22 (MPKMKSHTGMGKRVRVTGKGKI) shows a compositional bias: basic residues. Residues 1–28 (MPKMKSHTGMGKRVRVTGKGKIVKQQAG) are disordered.

This sequence belongs to the bacterial ribosomal protein bL35 family.

This Salinispora tropica (strain ATCC BAA-916 / DSM 44818 / JCM 13857 / NBRC 105044 / CNB-440) protein is Large ribosomal subunit protein bL35.